The following is a 231-amino-acid chain: MQGKFDKIANITLVMKTLDNNLPFNLQIENQLFSSGYELVAGGDEAGRGPVAGPVVAAIVVIKPGIYIPEVDDSKKLSSKKREKLFEEIINLVTDWSVAVVGPDLIDRLNIYQATKFAFKAALDSLSIKPEALILDALKLTGFSGKQVSMVKADEISFAVACASILAKVIRDKIMEQYDKDFPGYGFKKNKGYLTREHREALELLGPSPIHRKSFEPIKSFYGQLKLFEKV.

The RNase H type-2 domain occupies 38–227 (ELVAGGDEAG…IKSFYGQLKL (190 aa)). A divalent metal cation-binding residues include D44, E45, and D136.

This sequence belongs to the RNase HII family. The cofactor is Mn(2+). It depends on Mg(2+) as a cofactor.

It is found in the cytoplasm. It carries out the reaction Endonucleolytic cleavage to 5'-phosphomonoester.. Endonuclease that specifically degrades the RNA of RNA-DNA hybrids. The protein is Ribonuclease HII of Carboxydothermus hydrogenoformans (strain ATCC BAA-161 / DSM 6008 / Z-2901).